Reading from the N-terminus, the 793-residue chain is DnaJ homolog subfamily C member 10 (793 aa).

Residues 1-32 form the signal peptide; that stretch reads MGVWLSKDDYIRDLKRIILCFLIVYMAILVGT. The J domain occupies 35–100; sequence DFYSLLGVSK…DLRKKYDKYG (66 aa). One can recognise a Thioredoxin 1 domain in the interval 130–232; it reads EIITLERREF…ESLVSFAMQH (103 aa). Residues cysteine 158 and cysteine 161 are joined by a disulfide bond. Trxb stretches follow at residues 235–350 and 348–463; these read STVT…LPDF and PDFE…PQNF. Thioredoxin domains lie at 454–553, 557–662, and 671–778; these read HVTT…IEDL, SVVS…SLRI, and VSTG…INEK. Cysteine 480 and cysteine 483 are oxidised to a cystine. N-linked (GlcNAc...) asparagine glycosylation occurs at asparagine 530. 2 disulfide bridges follow: cysteine 588–cysteine 591 and cysteine 700–cysteine 703. Residues 790-793 carry the Prevents secretion from ER motif; sequence KDEL.

Interacts with HSPA5 (via its J domain). Interacts with EDEM1.

The protein resides in the endoplasmic reticulum lumen. Its function is as follows. Endoplasmic reticulum disulfide reductase involved both in the correct folding of proteins and degradation of misfolded proteins. Required for efficient folding of proteins in the endoplasmic reticulum by catalyzing the removal of non-native disulfide bonds formed during the folding of proteins, such as LDLR. Also involved in endoplasmic reticulum-associated degradation (ERAD) by reducing incorrect disulfide bonds in misfolded glycoproteins recognized by EDEM1. Interaction with HSPA5 is required its activity, not for the disulfide reductase activity, but to facilitate the release of DNAJC10 from its substrate. Promotes apoptotic signaling pathway in response to endoplasmic reticulum stress. In Pongo abelii (Sumatran orangutan), this protein is DnaJ homolog subfamily C member 10 (DNAJC10).